A 414-amino-acid polypeptide reads, in one-letter code: Leucine-rich repeat protein 1 (414 aa).

LRR repeat units lie at residues Ser155–Leu176, Ser178–Leu199, His201–Ser222, Ser227–Leu248, Glu250–Leu271, Asn273–Leu294, and Ser295–Lys316.

As to quaternary structure, component of the probable ECS(LRR1) E3 ubiquitin-protein ligase complex which contains CUL2, RBX1, Elongin BC complex and LRR1. Interacts with CUL2, RBX1, ELOB and ELOC. In terms of tissue distribution, ubiquitous. Maximal expression was seen in the heart and skeletal muscle and minimal expression seen in the kidney.

It localises to the nucleus. The protein operates within protein modification; protein ubiquitination. Substrate recognition subunit of an ECS (Elongin BC-CUL2/5-SOCS-box protein) E3 ubiquitin-protein ligase complex which mediates the ubiquitination and subsequent proteasomal degradation of target proteins. ECS(LRR1) ubiquitinates MCM7 and promotes CMG replisome disassembly by VCP and chromatin extraction during S-phase. May negatively regulate the 4-1BB-mediated signaling cascades which result in the activation of NK-kappaB and JNK1. The protein is Leucine-rich repeat protein 1 of Homo sapiens (Human).